Reading from the N-terminus, the 243-residue chain is Aquaporin SIP1-2 (243 aa).

Helical transmembrane passes span 9 to 29 and 45 to 65; these read AAAA…TLGA and FALL…NILC. The NPA 1 signature appears at 74–76; it reads NPT. 3 helical membrane-spanning segments follow: residues 98–118, 136–156, and 163–183; these read LPAQ…LMPA, GAGA…LIIV, and IIKT…GAAY. The NPA 2 signature appears at 189 to 191; that stretch reads NPA. A helical transmembrane segment spans residues 211–231; sequence VYWICPFIGAILAAWIFRAMF.

The protein belongs to the MIP/aquaporin (TC 1.A.8) family. SIP (TC 1.A.8.10) subfamily.

It is found in the membrane. Functionally, aquaporins facilitate the transport of water and small neutral solutes across cell membranes. This is Aquaporin SIP1-2 (SIP1-2) from Zea mays (Maize).